The chain runs to 522 residues: Zinc finger protein C25B8.19c (522 aa).

5 disordered regions span residues 1–25, 61–96, 235–265, 311–386, and 413–462; these read MSSD…LPTT, DPQA…SNSN, QRQS…QEVT, QPSS…HTLS, and NSAQ…STSS. The segment covering 84 to 96 has biased composition (low complexity); sequence AGNTNTPTTSNSN. Polar residues-rich tracts occupy residues 311–321 and 335–344; these read QPSSRDLQNHP and ASNTLNHANG. The segment covering 345-362 has biased composition (low complexity); the sequence is NQAENASESSTSQSNDSQ. Polar residues predominate over residues 413 to 427; the sequence is NSAQAHPMGQQSDSN. The span at 428-438 shows a compositional bias: basic and acidic residues; sequence YSDHHNNDKRA. Residues 453–462 are compositionally biased toward low complexity; that stretch reads SHTGSSSTSS. C2H2-type zinc fingers lie at residues 468–495 and 496–522; these read YRCT…GERP and FVCD…IHGL.

The protein localises to the nucleus. This Schizosaccharomyces pombe (strain 972 / ATCC 24843) (Fission yeast) protein is Zinc finger protein C25B8.19c.